Consider the following 221-residue polypeptide: MQKPSLELKGSSFTLSVLHINDADLDGVARELDDKLAIAPQFFLGAPLVVNLSAISDPDYNLAGLKDLLISRQLVIVGITGAPSAIANQAKALGLALIKSGKQSQTQPQLPKTTKIVKQNIRSGQQIYAQNGDLIIIGAVGNGAEVIADGSIHIYGSLRGKAMAGANGDKNAVIIAQNIDAELVSIAGQYWLTENLQAHASIKSGCIRLDGDSLTVEALSL.

Belongs to the MinC family. As to quaternary structure, interacts with MinD and FtsZ.

Its function is as follows. Cell division inhibitor that blocks the formation of polar Z ring septums. Rapidly oscillates between the poles of the cell to destabilize FtsZ filaments that have formed before they mature into polar Z rings. Prevents FtsZ polymerization. The protein is Probable septum site-determining protein MinC of Shewanella loihica (strain ATCC BAA-1088 / PV-4).